The primary structure comprises 166 residues: UPF0304 protein VF_1794 (166 aa).

Belongs to the UPF0304 family.

In Aliivibrio fischeri (strain ATCC 700601 / ES114) (Vibrio fischeri), this protein is UPF0304 protein VF_1794.